A 599-amino-acid chain; its full sequence is Elongation factor 4 (599 aa).

The region spanning 2–184 (KHIRNFSIIA…RLVRDIPPPE (183 aa)) is the tr-type G domain. GTP is bound by residues 14–19 (DHGKST) and 131–134 (NKID).

Belongs to the TRAFAC class translation factor GTPase superfamily. Classic translation factor GTPase family. LepA subfamily.

Its subcellular location is the cell inner membrane. The catalysed reaction is GTP + H2O = GDP + phosphate + H(+). Required for accurate and efficient protein synthesis under certain stress conditions. May act as a fidelity factor of the translation reaction, by catalyzing a one-codon backward translocation of tRNAs on improperly translocated ribosomes. Back-translocation proceeds from a post-translocation (POST) complex to a pre-translocation (PRE) complex, thus giving elongation factor G a second chance to translocate the tRNAs correctly. Binds to ribosomes in a GTP-dependent manner. The sequence is that of Elongation factor 4 from Pectobacterium carotovorum subsp. carotovorum (strain PC1).